A 226-amino-acid polypeptide reads, in one-letter code: Small ribosomal subunit protein uS3 (226 aa).

Residues 39 to 109 form the KH type-2 domain; that stretch reads IYKFFDKFTR…KLDVNLKVLT (71 aa).

It belongs to the universal ribosomal protein uS3 family. In terms of assembly, part of the 30S ribosomal subunit. Forms a tight complex with proteins S10 and S14.

Binds the lower part of the 30S subunit head. Binds mRNA in the 70S ribosome, positioning it for translation. This Mycoplasmopsis synoviae (strain 53) (Mycoplasma synoviae) protein is Small ribosomal subunit protein uS3.